The sequence spans 1201 residues: Transcription-repair-coupling factor (1201 aa).

The segment at 1–27 is disordered; sequence MRLLITLGPSGSTHGHSLHTDAGRRRG. Residues 670 to 831 form the Helicase ATP-binding domain; the sequence is DMQKPEPMDR…MSGVRDMSII (162 aa). 683-690 is a binding site for ATP; that stretch reads GDVGYGKT. A DEEQ box motif is present at residues 784–787; that stretch reads DEEQ. In terms of domain architecture, Helicase C-terminal spans 852-1006; that stretch reads VVKEAIEREV…GFSIASHDLE (155 aa).

The protein in the N-terminal section; belongs to the UvrB family. In the C-terminal section; belongs to the helicase family. RecG subfamily.

It is found in the cytoplasm. In terms of biological role, couples transcription and DNA repair by recognizing RNA polymerase (RNAP) stalled at DNA lesions. Mediates ATP-dependent release of RNAP and its truncated transcript from the DNA, and recruitment of nucleotide excision repair machinery to the damaged site. The chain is Transcription-repair-coupling factor from Myxococcus xanthus.